The following is a 409-amino-acid chain: Histidine--tRNA ligase (409 aa).

The protein belongs to the class-II aminoacyl-tRNA synthetase family. As to quaternary structure, homodimer.

It localises to the cytoplasm. It catalyses the reaction tRNA(His) + L-histidine + ATP = L-histidyl-tRNA(His) + AMP + diphosphate + H(+). The polypeptide is Histidine--tRNA ligase (Campylobacter fetus subsp. fetus (strain 82-40)).